Consider the following 385-residue polypeptide: GDP-mannose-dependent alpha-(1-6)-phosphatidylinositol monomannoside mannosyltransferase (385 aa).

GDP-alpha-D-mannose is bound by residues arginine 205, lysine 210, valine 262, and glutamate 299.

It belongs to the glycosyltransferase group 1 family. Glycosyltransferase 4 subfamily.

The catalysed reaction is a 1,2-diacyl-sn-glycero-3-phospho-[alpha-D-mannopyranosyl-(1&lt;-&gt;6)-D-myo-inositol] + GDP-alpha-D-mannose = a 2,6-O-bis(alpha-D-mannopyranosyl)-1-phosphatidyl-1D-myo-inositol + GDP + H(+). The enzyme catalyses a 1,2-diacyl-sn-glycero-3-phospho-[alpha-D-6-acyl-mannopyranosyl-(1&lt;-&gt;6)-D-myo-inositol] + GDP-alpha-D-mannose = a 2-O-(alpha-D-mannosyl)-6-O-(6-O-acyl-alpha-D-mannosyl)-1-phosphatidyl-1D-myo-inositol + GDP + H(+). The protein operates within phospholipid metabolism; phosphatidylinositol metabolism. Involved in the biosynthesis of phosphatidyl-myo-inositol mannosides (PIM) which are early precursors in the biosynthesis of lipomannans (LM) and lipoarabinomannans (LAM). Catalyzes the addition of a mannosyl residue from GDP-D-mannose (GDP-Man) to the position 6 of a phosphatidyl-myo-inositol bearing an alpha-1,2-linked mannose residue (PIM1) to generate phosphatidyl-myo-inositol bearing alpha-1,2- and alpha-1,6-linked mannose residues (Ac1PIM2). PimB also catalyzes the addition of a mannosyl residue from GDP-Man to the position 6 of phosphatidyl-myo-inositol bearing an acylated alpha-1,2-linked mannose residue (Ac1PIM1) to generate monoacylated phosphatidyl-myo-inositol bearing alpha-1,2- and alpha-1,6-linked mannose residues (Ac1PIM2). The addition of the second mannosyl residue by PimB preferentially occurs before the acylation of the mannosyl residue transferred by PimA. Also able to transfer a mannosyl residue from GDP-Man to the position 6 of a phosphatidyl-myo-inositol (PI), but this reaction is very slow. This chain is GDP-mannose-dependent alpha-(1-6)-phosphatidylinositol monomannoside mannosyltransferase, found in Mycobacterium tuberculosis (strain CDC 1551 / Oshkosh).